The sequence spans 108 residues: uncharacterized protein (108 aa).

A helical membrane pass occupies residues Asn-59–Ile-81.

Its subcellular location is the membrane. This is an uncharacterized protein from Rickettsia conorii (strain ATCC VR-613 / Malish 7).